The primary structure comprises 317 residues: Ribosomal protein L11 methyltransferase (317 aa).

S-adenosyl-L-methionine contacts are provided by threonine 158, glycine 179, aspartate 201, and asparagine 244.

This sequence belongs to the methyltransferase superfamily. PrmA family.

Its subcellular location is the cytoplasm. It carries out the reaction L-lysyl-[protein] + 3 S-adenosyl-L-methionine = N(6),N(6),N(6)-trimethyl-L-lysyl-[protein] + 3 S-adenosyl-L-homocysteine + 3 H(+). Methylates ribosomal protein L11. This chain is Ribosomal protein L11 methyltransferase, found in Streptococcus pyogenes serotype M49 (strain NZ131).